We begin with the raw amino-acid sequence, 282 residues long: N-acetylaspartate synthetase (282 aa).

Residues 103-125 form a helical membrane-spanning segment; that stretch reads FLTVMCYVMTKSFTLTFCAPFIL. The N-acetyltransferase domain maps to 110 to 269; it reads VMTKSFTLTF…RSPLERLFFQ (160 aa).

It belongs to the NAT8 family.

The protein resides in the cytoplasm. Its subcellular location is the microsome membrane. It is found in the mitochondrion membrane. The protein localises to the endoplasmic reticulum membrane. The catalysed reaction is L-aspartate + acetyl-CoA = N-acetyl-L-aspartate + CoA + H(+). In terms of biological role, catalyzes the synthesis of N-acetylaspartate acid (NAA) from L-aspartate and acetyl-CoA. This is N-acetylaspartate synthetase (nat8l) from Danio rerio (Zebrafish).